We begin with the raw amino-acid sequence, 132 residues long: Ribosome-binding factor A (132 aa).

Belongs to the RbfA family. In terms of assembly, monomer. Binds 30S ribosomal subunits, but not 50S ribosomal subunits or 70S ribosomes.

It localises to the cytoplasm. Its function is as follows. One of several proteins that assist in the late maturation steps of the functional core of the 30S ribosomal subunit. Associates with free 30S ribosomal subunits (but not with 30S subunits that are part of 70S ribosomes or polysomes). Required for efficient processing of 16S rRNA. May interact with the 5'-terminal helix region of 16S rRNA. This is Ribosome-binding factor A from Teredinibacter turnerae (strain ATCC 39867 / T7901).